Reading from the N-terminus, the 115-residue chain is T-cell receptor gamma chain V region V108B (115 aa).

The first 18 residues, 1 to 18 (MLLLRWPTFCCLWVFGLG), serve as a signal peptide directing secretion. The segment at 19–115 (QLEQTELSVT…EATYYCAVWI (97 aa)) is v segment.

The sequence is that of T-cell receptor gamma chain V region V108B (Tcrg-V1) from Mus musculus (Mouse).